A 203-amino-acid polypeptide reads, in one-letter code: Putative B3 domain-containing protein At1g50220 (203 aa).

The segment at residues 99-195 is a DNA-binding region (TF-B3); it reads DIVGNVALPK…KFIVLNFQHK (97 aa).

The protein localises to the nucleus. The sequence is that of Putative B3 domain-containing protein At1g50220 from Arabidopsis thaliana (Mouse-ear cress).